Consider the following 228-residue polypeptide: Ribosomal RNA small subunit methyltransferase G (228 aa).

S-adenosyl-L-methionine-binding positions include glycine 89, leucine 94, 140–141 (VE), and arginine 159.

It belongs to the methyltransferase superfamily. RNA methyltransferase RsmG family.

It localises to the cytoplasm. The catalysed reaction is guanosine(527) in 16S rRNA + S-adenosyl-L-methionine = N(7)-methylguanosine(527) in 16S rRNA + S-adenosyl-L-homocysteine. Functionally, specifically methylates the N7 position of guanine in position 527 of 16S rRNA. This is Ribosomal RNA small subunit methyltransferase G from Burkholderia ambifaria (strain MC40-6).